The sequence spans 198 residues: HTH-type transcriptional regulator BetI (198 aa).

The HTH tetR-type domain occupies 8-68 (PLRRRELIDA…ATMRHLLREL (61 aa)). The H-T-H motif DNA-binding region spans 31 to 50 (TVAQIAHEAGVSPALAHHYF).

It participates in amine and polyamine biosynthesis; betaine biosynthesis via choline pathway [regulation]. In terms of biological role, repressor involved in the biosynthesis of the osmoprotectant glycine betaine. It represses transcription of the choline transporter BetT and the genes of BetAB involved in the synthesis of glycine betaine. The sequence is that of HTH-type transcriptional regulator BetI from Brucella abortus (strain 2308).